The sequence spans 152 residues: Allergen Asp f 15 (152 aa).

The N-terminal stretch at 1–19 (MKFTTPISLISLFVSSALA) is a signal peptide. Disulfide bonds link Cys-53-Cys-90 and Cys-93-Cys-148.

The protein belongs to the cerato-platanin family.

Its subcellular location is the secreted. This is Allergen Asp f 15 from Aspergillus fumigatus (strain ATCC MYA-4609 / CBS 101355 / FGSC A1100 / Af293) (Neosartorya fumigata).